We begin with the raw amino-acid sequence, 520 residues long: Ribonuclease Y (520 aa).

A helical transmembrane segment spans residues 3-23; it reads IEIQWIGIGAAFLVGAIGGAL. One can recognise a KH domain in the interval 210–273; that stretch reads AVSVVPLPND…EVARLALERL (64 aa). In terms of domain architecture, HD spans 336 to 429; that stretch reads VLQHSIEVAF…VQAADALSGA (94 aa).

The protein belongs to the RNase Y family.

It localises to the cell membrane. Functionally, endoribonuclease that initiates mRNA decay. The protein is Ribonuclease Y of Syntrophotalea carbinolica (strain DSM 2380 / NBRC 103641 / GraBd1) (Pelobacter carbinolicus).